A 427-amino-acid chain; its full sequence is MTAATSVQPSPAPRQPGLRATFNPRKEEKVFLARGAHAFTLPGRRASVNVEVDVEAESDEAALDAKETTITVSYAEKGQESSWSAAKWIKLDRLAKTSQHGVVNEDRATYQQAWSLELLDEAVEPARAIWSALYAFWIRHKRSDRLAVLLKGTQATKVRSYVFEAGLGFKSPCETDLILLDRNAFWQGAGAPAGLHWLQTPVPTRGLFPYVLDFTQSTSPPVLATHPLRPPKPAPGSVVYSRYVFSCSQHLELVHIDVSNPQHFDAYTRWQNSDRVNHGWREKGSDEKHRKYITEKNDDPHAMGVLVLWDGVPAGYGEMVWSKEDGMAAFVGGLGNYDQGTHLLIGEEQFRGKHRFTACMVSLKHACFLRDPRTEVVVGEPRYDLDIIPLLATFLPQEIRKEVELPHKRAVFFVLRRDRFLEEGILE.

Residues 1 to 24 (MTAATSVQPSPAPRQPGLRATFNP) form a disordered region. Position 342 (histidine 342) interacts with substrate. Residue glutamate 380 is the Proton acceptor of the active site.

It belongs to the lysine N-acyltransferase mbtK family.

The protein operates within siderophore biosynthesis. Acyltransferase; part of the gene cluster that mediates the biosynthesis of siderophore ferrichrome A which is contributing to organismal virulence. The first step of ferrichrome A biosynthesis is performed by the HMG-CoA synthase hcs1 which catalyzes the generation of HMG-CoA and CoA using acetoacetyl-CoA and acetyl-CoA as substrates. The enoyl-CoA isomerase/hydratase fer4 then catalyzes the conversion of hcs1-produced HMG-CoA to methylglutaconyl-CoA. The acyltransferase fer5 then fuses the fer4-generated methylglutaconyl-CoA with sid1-generated hydroxyornithine to yield methylglutaconyl hydroxyornithine. Methylglutaconyl hydroxyornithine is then available for use by the NRPS fer3 to generate ferrichrome A. The chain is Acyltransferase fer5 from Mycosarcoma maydis (Corn smut fungus).